Here is a 472-residue protein sequence, read N- to C-terminus: Glutamate--tRNA ligase (472 aa).

The 'HIGH' region signature appears at 7 to 17 (PSPTGFLHVGG). Positions 96, 98, 123, and 125 each coordinate Zn(2+). A compositionally biased stretch (basic and acidic residues) spans 112–129 (ARKEKPRYDGRCRHRSEP). Positions 112–134 (ARKEKPRYDGRCRHRSEPPSDQP) are disordered. Residues 234 to 238 (KLSKR) carry the 'KMSKS' region motif. Lys-237 contacts ATP.

It belongs to the class-I aminoacyl-tRNA synthetase family. Glutamate--tRNA ligase type 1 subfamily. Monomer. Zn(2+) serves as cofactor.

The protein resides in the cytoplasm. The enzyme catalyses tRNA(Glu) + L-glutamate + ATP = L-glutamyl-tRNA(Glu) + AMP + diphosphate. Its function is as follows. Catalyzes the attachment of glutamate to tRNA(Glu) in a two-step reaction: glutamate is first activated by ATP to form Glu-AMP and then transferred to the acceptor end of tRNA(Glu). The polypeptide is Glutamate--tRNA ligase (Magnetococcus marinus (strain ATCC BAA-1437 / JCM 17883 / MC-1)).